The sequence spans 183 residues: D-glycero-alpha-D-manno-heptose-1,7-bisphosphate 7-phosphatase (183 aa).

Positions 93, 95, 108, and 110 each coordinate Zn(2+).

It belongs to the GmhB family.

The protein resides in the cytoplasm. The enzyme catalyses D-glycero-alpha-D-manno-heptose 1,7-bisphosphate + H2O = D-glycero-alpha-D-manno-heptose 1-phosphate + phosphate. It participates in nucleotide-sugar biosynthesis; GDP-D-glycero-alpha-D-manno-heptose biosynthesis; GDP-D-glycero-alpha-D-manno-heptose from D-glycero-alpha-D-manno-heptose 7-phosphate: step 2/3. Its function is as follows. Converts the D-glycero-alpha-D-manno-heptose 1,7-bisphosphate intermediate into D-glycero-alpha-D-manno-heptose 1-phosphate by removing the phosphate group at the C-7 position. This chain is D-glycero-alpha-D-manno-heptose-1,7-bisphosphate 7-phosphatase (gmhB2), found in Photorhabdus laumondii subsp. laumondii (strain DSM 15139 / CIP 105565 / TT01) (Photorhabdus luminescens subsp. laumondii).